The sequence spans 201 residues: Small ribosomal subunit protein uS4c (201 aa).

The segment at 23-42 (SKKPRAGSNLRNQLRPGKKS) is disordered. Positions 89 to 151 (MRLDNILFRL…QKSKSLVQNY (63 aa)) constitute an S4 RNA-binding domain.

It belongs to the universal ribosomal protein uS4 family. As to quaternary structure, part of the 30S ribosomal subunit. Contacts protein S5. The interaction surface between S4 and S5 is involved in control of translational fidelity.

The protein resides in the plastid. Its subcellular location is the chloroplast. Its function is as follows. One of the primary rRNA binding proteins, it binds directly to 16S rRNA where it nucleates assembly of the body of the 30S subunit. In terms of biological role, with S5 and S12 plays an important role in translational accuracy. The sequence is that of Small ribosomal subunit protein uS4c (rps4) from Morus indica (Mulberry).